A 150-amino-acid chain; its full sequence is Small ribosomal subunit protein eS19 (150 aa).

This sequence belongs to the eukaryotic ribosomal protein eS19 family. In terms of assembly, part of the 30S ribosomal subunit.

Functionally, may be involved in maturation of the 30S ribosomal subunit. This is Small ribosomal subunit protein eS19 from Pyrococcus horikoshii (strain ATCC 700860 / DSM 12428 / JCM 9974 / NBRC 100139 / OT-3).